A 416-amino-acid chain; its full sequence is Enterobactin exporter EntS (416 aa).

Topologically, residues 1–21 are cytoplasmic; the sequence is MNKQSWLLNLSLLKTHPAFRA. A helical membrane pass occupies residues 22-42; that stretch reads VFLARFISIVSLGLLGVAVPV. At 43–55 the chain is on the periplasmic side; the sequence is QIQMMTHSTWLVG. A helical transmembrane segment spans residues 56–76; the sequence is LSVTLTGGAMFVGLMVGGVLA. Over 77 to 83 the chain is Cytoplasmic; that stretch reads DRYERKK. Residues 84 to 104 form a helical membrane-spanning segment; the sequence is VILLARGTCGIGFIGLCLNAL. Residues 105–109 lie on the Periplasmic side of the membrane; sequence LPEPS. A helical transmembrane segment spans residues 110-130; sequence LLAIYLLGLWDGFFASLGVTA. Over 131–156 the chain is Cytoplasmic; the sequence is LLAATPALVGRENLMQAGAITMLTVR. The helical transmembrane segment at 157–177 threads the bilayer; it reads LGSVISPMIGGLLLATGGVAW. Asparagine 178 is a topological domain (periplasmic). A helical transmembrane segment spans residues 179–199; sequence YGLAAAGTFITLLPLLSLPAL. The Cytoplasmic portion of the chain corresponds to 200-218; that stretch reads PPPPQPREHPLKSLLAGFR. The chain crosses the membrane as a helical span at residues 219–239; sequence FLLASPLVGGIALLGGLLTMA. Residues 240-256 lie on the Periplasmic side of the membrane; sequence SAVRVLYPALADNWQMS. The helical transmembrane segment at 257-277 threads the bilayer; it reads AAEIGFLYAAIPLGAAIGALT. Residues 278-287 lie on the Cytoplasmic side of the membrane; sequence SGKLAHSARP. Residues 288–307 traverse the membrane as a helical segment; the sequence is GLLMLLSTLGSFLAIGLFGL. The Periplasmic segment spans residues 308 to 313; the sequence is MPMWIL. A helical membrane pass occupies residues 314–336; that stretch reads GVVCLALFGWLSAVSSLLQYTML. At 337–356 the chain is on the cytoplasmic side; that stretch reads QTQTPEAMLGRINGLWTAQN. A helical membrane pass occupies residues 357–377; sequence VTGDAIGAALLGGLGAMMTPV. Residue alanine 378 is a topological domain, periplasmic. The helical transmembrane segment at 379-399 threads the bilayer; that stretch reads SASASGFGLLIIGVLLLLVLV. At 400–416 the chain is on the cytoplasmic side; that stretch reads ELRRFRQTPPQVTASDS.

This sequence belongs to the major facilitator superfamily. EntS (TC 2.A.1.38) family.

It localises to the cell inner membrane. In terms of biological role, component of an export pathway for enterobactin. In Shigella boydii serotype 4 (strain Sb227), this protein is Enterobactin exporter EntS.